Consider the following 878-residue polypeptide: Phosphoenolpyruvate carboxylase (878 aa).

Active-site residues include H137 and K545.

It belongs to the PEPCase type 1 family. Mg(2+) is required as a cofactor.

It carries out the reaction oxaloacetate + phosphate = phosphoenolpyruvate + hydrogencarbonate. Forms oxaloacetate, a four-carbon dicarboxylic acid source for the tricarboxylic acid cycle. This is Phosphoenolpyruvate carboxylase from Photorhabdus laumondii subsp. laumondii (strain DSM 15139 / CIP 105565 / TT01) (Photorhabdus luminescens subsp. laumondii).